Consider the following 244-residue polypeptide: rRNA adenine N-6-methyltransferase (244 aa).

The S-adenosyl-L-methionine site is built by asparagine 11, isoleucine 13, glycine 38, glutamate 59, aspartate 84, and asparagine 101.

This sequence belongs to the class I-like SAM-binding methyltransferase superfamily. rRNA adenine N(6)-methyltransferase family.

The enzyme catalyses adenosine(2085) in 23S rRNA + 2 S-adenosyl-L-methionine = N(6)-dimethyladenosine(2085) in 23S rRNA + 2 S-adenosyl-L-homocysteine + 2 H(+). Its function is as follows. This protein produces a dimethylation of the adenine residue at position 2085 in 23S rRNA, resulting in reduced affinity between ribosomes and macrolide-lincosamide-streptogramin B antibiotics. In Bacillus subtilis, this protein is rRNA adenine N-6-methyltransferase (ermC').